The following is a 233-amino-acid chain: Movement and silencing protein TGBp1 (233 aa).

The region spanning 1–133 (MNHFINLLVA…CKLLSSLGIK (133 aa)) is the (+)RNA virus helicase ATP-binding domain. The region spanning 134–233 (VESHRRDRDV…EFPHTTSRPQ (100 aa)) is the (+)RNA virus helicase C-terminal domain.

The protein belongs to the Tymovirales TGBp1 protein family. Homodimer and homooligomer. Interacts with capsid protein. Interacts with host AGO1; this interaction targets the host protein for degradation, thereby suppressing the antiviral RNA silencing.

The protein localises to the host cytoplasm. In terms of biological role, transports viral genome to neighboring plant cells directly through plasmosdesmata, without any budding. The movement protein allows efficient cell to cell propagation, by bypassing the host cell wall barrier. Increases plasmodesma size exclusion limit. Acts as a suppressor of RNA-mediated gene silencing, also known as post-transcriptional gene silencing (PTGS), a mechanism of plant viral defense that limits the accumulation of viral RNAs. In Carica papaya (Papaya), this protein is Movement and silencing protein TGBp1.